The sequence spans 427 residues: MLDIKWIRENPELLDQALAKRGAEPLSQSLIALDEQRRAVVQDMQDMQSRRNSASKEIGAAMAQKDMALAEKLKAEVASLKDTLPAAEEDERRLSAELTDALSRIPNIPLDDVPVGADEHDNVVARVVGQKPGWNHTAIEHPEIGEALGYMDFDRAAKLSGARFTVLTGPLARLERALGQFMIDLHTSEHGYTEVSSPLMVRDEAMYGTGQLPKFSEELFKTTDGRWLIPTAEVTLTNLVSGEILDQEKLPLRFTALTPSFRSEAGSAGRDTRGMLRQHQFWKCELVSITDAQSALAEHERMTACAEEVLKRLGLHFRTMTLCTGDMGFGAAKTYDLEVWLPGQNTFREISSCSVCGDFQGRRMNARYRNKDGKGTTFVHTLNGSGTAVGRCLIAVMENYLNEDGSITVPDVLLPYMGGLTRIEKAS.

Threonine 231–glutamate 233 is a binding site for L-serine. Position 262 to 264 (arginine 262 to glutamate 264) interacts with ATP. Glutamate 285 provides a ligand contact to L-serine. Residue glutamate 349–serine 352 participates in ATP binding. Serine 385 contributes to the L-serine binding site.

It belongs to the class-II aminoacyl-tRNA synthetase family. Type-1 seryl-tRNA synthetase subfamily. Homodimer. The tRNA molecule binds across the dimer.

The protein resides in the cytoplasm. The enzyme catalyses tRNA(Ser) + L-serine + ATP = L-seryl-tRNA(Ser) + AMP + diphosphate + H(+). It carries out the reaction tRNA(Sec) + L-serine + ATP = L-seryl-tRNA(Sec) + AMP + diphosphate + H(+). It functions in the pathway aminoacyl-tRNA biosynthesis; selenocysteinyl-tRNA(Sec) biosynthesis; L-seryl-tRNA(Sec) from L-serine and tRNA(Sec): step 1/1. In terms of biological role, catalyzes the attachment of serine to tRNA(Ser). Is also able to aminoacylate tRNA(Sec) with serine, to form the misacylated tRNA L-seryl-tRNA(Sec), which will be further converted into selenocysteinyl-tRNA(Sec). The polypeptide is Serine--tRNA ligase (Allorhizobium ampelinum (strain ATCC BAA-846 / DSM 112012 / S4) (Agrobacterium vitis (strain S4))).